The sequence spans 172 residues: CD164 sialomucin-like 2 protein (172 aa).

An N-terminal signal peptide occupies residues 1 to 29; that stretch reads MAAPGPRALRAALCGGCCCLLLCAQLVLA. Residues 30–137 lie on the Extracellular side of the membrane; the sequence is GKGARGFGRG…PEDHSPGFDG (108 aa). 2 N-linked (GlcNAc...) asparagine glycosylation sites follow: N69 and N101. The tract at residues 108–132 is disordered; the sequence is ASHHHSTEEPKPSTTGSPPIPEDHS. Residues 138 to 158 form a helical membrane-spanning segment; it reads ASFIGGIVLVLSLQATAFFVL. Residues 159-172 lie on the Cytoplasmic side of the membrane; it reads RFLKAKDSTYQTLI.

The protein belongs to the CD164 family.

It localises to the membrane. In Mus musculus (Mouse), this protein is CD164 sialomucin-like 2 protein (Cd164l2).